The following is a 1282-amino-acid chain: Myosin-1 (1282 aa).

The interval 1-30 (MAISKKAGAKKAGAVSKPPPSKGASSKGGV) is disordered. A Myosin motor domain is found at 44 to 723 (AGVSDMTLLS…TLFALETMRD (680 aa)). 137–144 (GESGAGKT) contributes to the ATP binding site. Serine 365 carries the post-translational modification Phosphoserine. Residues 412-494 (VIGVLDIYGF…PGIFSALNDA (83 aa)) form an actin-binding region. The interval 569–590 (LQKLFPDRPDPNSKKRPPTAGD) is disordered. 2 IQ domains span residues 727 to 747 (HNMA…KEEC) and 748 to 773 (ARRI…YGHQ). In terms of domain architecture, TH1 spans 781 to 977 (RRRFSLLGLR…AVSVCSGEPA (197 aa)). The disordered stretch occupies residues 973–1073 (SGEPANSVSR…PPPAAVAPSE (101 aa)). Residues 1029 to 1058 (PGSGAAGTARPAAAVGSASAGAGVGATRSA) are compositionally biased toward low complexity. The span at 1059 to 1068 (PRPPPPPPAA) shows a compositional bias: pro residues. In terms of domain architecture, SH3 spans 1074–1135 (PQVARYKALY…PSNYLELIVQ (62 aa)). The interval 1237–1282 (AAAAAAGAGANGKGAGAPPAVAAKPVVAPKPAGSNGRAMPPPPPRR) is disordered. Over residues 1252 to 1269 (GAPPAVAAKPVVAPKPAG) the composition is skewed to low complexity.

It belongs to the TRAFAC class myosin-kinesin ATPase superfamily. Myosin family. Phosphorylation of the TEDS site (Ser-365) is required for the polarization of the actin cytoskeleton. Phosphorylation probably activates the myosin-I ATPase activity.

It is found in the cytoplasm. The protein localises to the cytoskeleton. Its subcellular location is the actin patch. Functionally, type-I myosin implicated in the organization of the actin cytoskeleton. Required for proper actin cytoskeleton polarization. At the cell cortex, assembles in patch-like structures together with proteins from the actin-polymerizing machinery and promotes actin assembly. Functions as actin nucleation-promoting factor (NPF) for the Arp2/3 complex. The protein is Myosin-1 (myo1) of Mycosarcoma maydis (Corn smut fungus).